The primary structure comprises 556 residues: Glutamine--tRNA ligase (556 aa).

Positions 33–43 (PEPNGYLHIGH) match the 'HIGH' region motif. Residues 34 to 36 (EPN) and 40 to 46 (HIGHAKS) contribute to the ATP site. D66 and Y210 together coordinate L-glutamine. ATP-binding positions include T229, 259–260 (RL), and 267–269 (MSK). Residues 266–270 (VMSKR) carry the 'KMSKS' region motif.

Belongs to the class-I aminoacyl-tRNA synthetase family. In terms of assembly, monomer.

It is found in the cytoplasm. It catalyses the reaction tRNA(Gln) + L-glutamine + ATP = L-glutaminyl-tRNA(Gln) + AMP + diphosphate. The chain is Glutamine--tRNA ligase from Clostridium kluyveri (strain ATCC 8527 / DSM 555 / NBRC 12016 / NCIMB 10680 / K1).